The sequence spans 935 residues: Clumping factor A (935 aa).

The first 39 residues, 1–39 (MNMKKKEKHAIRKKSIGVASVLVGTLIGFGLLSSKEADA), serve as a signal peptide directing secretion. A YSIRK-G/S signaling motif motif is present at residues 9–20 (HAIRKKSIGVAS). Disordered regions lie at residues 34-205 (SKEA…VSQA) and 529-906 (FNNG…SEDE). Residues 40 to 542 (SENSVTQSDS…SGSGDGIDKP (503 aa)) are ligand binding A region. The span at 47-65 (SDSASNESKSNDSSSVSAA) shows a compositional bias: low complexity. A compositionally biased stretch (polar residues) spans 71 to 105 (TNVSDTKTSSNTNNGETSVAQNPAQQETTQSSSTN). 2 stretches are compositionally biased toward low complexity: residues 106-132 (ATTE…ATTQ) and 143-162 (NQTS…SVNS). Positions 163–205 (PQNSTNAENVSTTQDTSTEATPSNNESAPQNTDASNKDVVSQA) are enriched in polar residues. A compositionally biased stretch (acidic residues) spans 547 to 565 (QPDEPGEIEPIPEDSDSDP). A compositionally biased stretch (low complexity) spans 566 to 598 (GSDSGSDSNSDSGSDSGSDSTSDSGSDSASDSD). Residues 599-863 (SASDSDSASD…DNDSDSDSNS (265 aa)) show a composition bias toward acidic residues. The segment covering 864–882 (DSESGSNNNVVPPNSPKNG) has biased composition (low complexity). Over residues 889-898 (NEAKDSKEPL) the composition is skewed to basic and acidic residues. An LPXTG sorting signal motif is present at residues 898–902 (LPDTG). Thr-901 is subject to Pentaglycyl murein peptidoglycan amidated threonine. The propeptide at 902 to 935 (GSEDEANTSLIWGLLASLGSLLLFRRKKENKDKK) is removed by sortase.

It belongs to the serine-aspartate repeat-containing protein (SDr) family.

Its subcellular location is the secreted. The protein resides in the cell wall. Its function is as follows. Cell surface-associated protein implicated in virulence. Promotes bacterial attachment exclusively to the gamma-chain of human fibrinogen. Induces formation of bacterial clumps. The sequence is that of Clumping factor A (clfA) from Staphylococcus aureus (strain Mu50 / ATCC 700699).